A 127-amino-acid polypeptide reads, in one-letter code: Fluoride-specific ion channel FluC (127 aa).

Helical transmembrane passes span 4–24 (SLLV…LLGM), 37–57 (TVVA…FLAA), 68–88 (LIIT…AETV), and 96–116 (LLWA…MTAA). Positions 75 and 78 each coordinate Na(+).

Belongs to the fluoride channel Fluc/FEX (TC 1.A.43) family.

It is found in the cell inner membrane. It catalyses the reaction fluoride(in) = fluoride(out). Its activity is regulated as follows. Na(+) is not transported, but it plays an essential structural role and its presence is essential for fluoride channel function. Its function is as follows. Fluoride-specific ion channel. Important for reducing fluoride concentration in the cell, thus reducing its toxicity. The polypeptide is Fluoride-specific ion channel FluC (Pseudomonas syringae pv. maculicola).